Here is a 141-residue protein sequence, read N- to C-terminus: MVRRKMDEKGVSPVIGVILMVAITVILAAVIASFVFGMSNVAPAAPPSAQLQVRTGSSADTVELKHMGGDPINCTSIKVLVNGKEESNALGSSGGCSDNLLKVGETETITLSGYGGQYVELTLVDIQTNKPILMTHVTVGG.

A helical membrane pass occupies residues 13 to 35; it reads PVIGVILMVAITVILAAVIASFV.

The protein resides in the membrane. This is an uncharacterized protein from Archaeoglobus fulgidus (strain ATCC 49558 / DSM 4304 / JCM 9628 / NBRC 100126 / VC-16).